Consider the following 306-residue polypeptide: tRNA dimethylallyltransferase (306 aa).

9–16 (GPTGIGKT) contacts ATP. A substrate-binding site is contributed by 11–16 (TGIGKT). The interval 34–37 (DSMQ) is interaction with substrate tRNA.

This sequence belongs to the IPP transferase family. Monomer. Mg(2+) is required as a cofactor.

The catalysed reaction is adenosine(37) in tRNA + dimethylallyl diphosphate = N(6)-dimethylallyladenosine(37) in tRNA + diphosphate. Catalyzes the transfer of a dimethylallyl group onto the adenine at position 37 in tRNAs that read codons beginning with uridine, leading to the formation of N6-(dimethylallyl)adenosine (i(6)A). The polypeptide is tRNA dimethylallyltransferase (Lactobacillus johnsonii (strain CNCM I-12250 / La1 / NCC 533)).